Reading from the N-terminus, the 300-residue chain is Sulfate adenylyltransferase subunit 2 (300 aa).

Belongs to the PAPS reductase family. CysD subfamily. As to quaternary structure, heterodimer composed of CysD, the smaller subunit, and CysN.

The enzyme catalyses sulfate + ATP + H(+) = adenosine 5'-phosphosulfate + diphosphate. It participates in sulfur metabolism; hydrogen sulfide biosynthesis; sulfite from sulfate: step 1/3. Its function is as follows. With CysN forms the ATP sulfurylase (ATPS) that catalyzes the adenylation of sulfate producing adenosine 5'-phosphosulfate (APS) and diphosphate, the first enzymatic step in sulfur assimilation pathway. APS synthesis involves the formation of a high-energy phosphoric-sulfuric acid anhydride bond driven by GTP hydrolysis by CysN coupled to ATP hydrolysis by CysD. In Magnetococcus marinus (strain ATCC BAA-1437 / JCM 17883 / MC-1), this protein is Sulfate adenylyltransferase subunit 2.